A 202-amino-acid chain; its full sequence is Securin (202 aa).

Ala-2 carries the N-acetylalanine modification. The interval 35–94 is disordered; that stretch reads LDGRSQVSTPRFGKTFDAPPALPKATRKALGTVNRATEKSVKTKGPLKQKQPSFSAKKMT. A D-box motif is present at residues 61 to 64; sequence RKAL. 2 consecutive short sequence motifs (TEK-box) follow at residues 71–73 and 94–96; these read TEK. Positions 163 to 173 match the SH3-binding motif; it reads PPSPVRMPSPP. A Phosphoserine; by CDK1 modification is found at Ser-165.

Belongs to the securin family. Interacts with RPS10 and DNAJA1. Interacts with the caspase-like ESPL1, and prevents its protease activity probably by covering its active site. Interacts with TP53 and blocks its activity probably by blocking its binding to DNA. Interacts with the Ku 70 kDa subunit of ds-DNA kinase. Interacts with PTTG1IP. Post-translationally, phosphorylated at Ser-165 by CDK1 during mitosis. Phosphorylated in vitro by ds-DNA kinase. In terms of processing, ubiquitinated through 'Lys-11' linkage of ubiquitin moieties by the anaphase promoting complex (APC) at the onset of anaphase, conducting to its degradation. 'Lys-11'-linked ubiquitination is mediated by the E2 ligase UBE2C/UBCH10.

The protein resides in the cytoplasm. It localises to the nucleus. Functionally, regulatory protein, which plays a central role in chromosome stability, in the p53/TP53 pathway, and DNA repair. Probably acts by blocking the action of key proteins. During the mitosis, it blocks Separase/ESPL1 function, preventing the proteolysis of the cohesin complex and the subsequent segregation of the chromosomes. At the onset of anaphase, it is ubiquitinated, conducting to its destruction and to the liberation of ESPL1. Its function is however not limited to a blocking activity, since it is required to activate ESPL1. Negatively regulates the transcriptional activity and related apoptosis activity of TP53. The negative regulation of TP53 may explain the strong transforming capability of the protein when it is overexpressed. May also play a role in DNA repair via its interaction with Ku, possibly by connecting DNA damage-response pathways with sister chromatid separation. The polypeptide is Securin (PTTG1) (Gorilla gorilla gorilla (Western lowland gorilla)).